The chain runs to 306 residues: Anamorsin (306 aa).

Residues 6 to 172 form an N-terminal SAM-like domain region; it reads IAPGQRVAVI…KPNFEVGSSS (167 aa). Positions 173 to 224 are linker; the sequence is QLKLSFAKKTSPSGKPSVDPATAKLWTLSASDMNDEEMDLLDSDELLDSEDL. [2Fe-2S] cluster-binding residues include cysteine 237, cysteine 246, cysteine 249, and cysteine 251. A fe-S binding site A region spans residues 237 to 251; the sequence is CKEKGKKKACKNCTC. [4Fe-4S] cluster is bound by residues cysteine 270, cysteine 273, cysteine 281, and cysteine 284. Short sequence motifs (cx2C motif) lie at residues 270 to 273 and 281 to 284; these read CGNC and CASC. The fe-S binding site B stretch occupies residues 270–284; it reads CGNCYLGDAFRCASC.

Belongs to the anamorsin family. In terms of assembly, monomer. Interacts with NDOR1. Interacts with CHCHD4. Requires [2Fe-2S] cluster as cofactor. It depends on [4Fe-4S] cluster as a cofactor.

The protein resides in the cytoplasm. It localises to the nucleus. The protein localises to the mitochondrion intermembrane space. Component of the cytosolic iron-sulfur (Fe-S) protein assembly (CIA) machinery required for the maturation of extramitochondrial Fe-S proteins. Part of an electron transfer chain functioning in an early step of cytosolic Fe-S biogenesis, facilitating the de novo assembly of a [4Fe-4S] cluster on the scaffold complex NUBP1-NUBP2. Electrons are transferred to CIAPIN1 from NADPH via the FAD- and FMN-containing protein NDOR1. NDOR1-CIAPIN1 are also required for the assembly of the diferric tyrosyl radical cofactor of ribonucleotide reductase (RNR), probably by providing electrons for reduction during radical cofactor maturation in the catalytic small subunit. Has anti-apoptotic effects in the cell. Involved in negative control of cell death upon cytokine withdrawal. Promotes development of hematopoietic cells. In Gallus gallus (Chicken), this protein is Anamorsin.